Reading from the N-terminus, the 199-residue chain is NAD(P)H dehydrogenase (quinone) (199 aa).

Positions 4–190 (VLVLYYSTYG…DGARFLGQHV (187 aa)) constitute a Flavodoxin-like domain. Residues 10–15 (STYGHI) and 78–80 (TRF) each bind FMN. Residue tyrosine 12 participates in NAD(+) binding. Residue tryptophan 98 participates in substrate binding. Residues 113 to 119 (STATQHG) and histidine 134 contribute to the FMN site.

Belongs to the WrbA family. It depends on FMN as a cofactor.

It catalyses the reaction a quinone + NADH + H(+) = a quinol + NAD(+). The enzyme catalyses a quinone + NADPH + H(+) = a quinol + NADP(+). The protein is NAD(P)H dehydrogenase (quinone) of Gluconacetobacter diazotrophicus (strain ATCC 49037 / DSM 5601 / CCUG 37298 / CIP 103539 / LMG 7603 / PAl5).